Here is a 93-residue protein sequence, read N- to C-terminus: Acylphosphatase (93 aa).

The Acylphosphatase-like domain maps to Cys-5 to Tyr-93. Catalysis depends on residues Arg-20 and Asn-38.

It belongs to the acylphosphatase family.

It carries out the reaction an acyl phosphate + H2O = a carboxylate + phosphate + H(+). The polypeptide is Acylphosphatase (acyP) (Citrobacter koseri (strain ATCC BAA-895 / CDC 4225-83 / SGSC4696)).